Here is a 100-residue protein sequence, read N- to C-terminus: Urease subunit gamma (100 aa).

This sequence belongs to the urease gamma subunit family. Heterotrimer of UreA (gamma), UreB (beta) and UreC (alpha) subunits. Three heterotrimers associate to form the active enzyme.

It is found in the cytoplasm. It catalyses the reaction urea + 2 H2O + H(+) = hydrogencarbonate + 2 NH4(+). Its pathway is nitrogen metabolism; urea degradation; CO(2) and NH(3) from urea (urease route): step 1/1. The sequence is that of Urease subunit gamma from Nitrosospira multiformis (strain ATCC 25196 / NCIMB 11849 / C 71).